Reading from the N-terminus, the 897-residue chain is Molybdenum import ATP-binding protein ModC 2 (897 aa).

The ABC transporter domain maps to 6 to 236 (RGRIDAAFRG…PALPLAYSRD (231 aa)). Residue 38–45 (GPSGCGKT) coordinates ATP. One can recognise a Mop domain in the interval 295–365 (ESSILNILPA…VKGVSLVRAS (71 aa)). The tract at residues 823–848 (LGDRSVLGPREPDAGAKGRKRQNDPE) is disordered. Positions 832 to 848 (REPDAGAKGRKRQNDPE) are enriched in basic and acidic residues.

It belongs to the ABC transporter superfamily. Molybdate importer (TC 3.A.1.8) family. As to quaternary structure, the complex is composed of two ATP-binding proteins (ModC), two transmembrane proteins (ModB) and a solute-binding protein (ModA).

The protein localises to the cell inner membrane. The enzyme catalyses molybdate(out) + ATP + H2O = molybdate(in) + ADP + phosphate + H(+). Its function is as follows. Part of the ABC transporter complex ModABC involved in molybdenum import. Responsible for energy coupling to the transport system. The chain is Molybdenum import ATP-binding protein ModC 2 from Bradyrhizobium diazoefficiens (strain JCM 10833 / BCRC 13528 / IAM 13628 / NBRC 14792 / USDA 110).